A 457-amino-acid chain; its full sequence is Chromosomal replication initiator protein DnaA (457 aa).

Positions 1-73 (MANNYQTLYD…SKYLSEEFKK (73 aa)) are domain I, interacts with DnaA modulators. The interval 73-108 (KENIVNFEFIIDNEKLLINSNFLIKETNIKNRFNFS) is domain II. Positions 109-331 (DELLRYNFNN…GNLKQICFWA (223 aa)) are domain III, AAA+ region. Residues G156, G158, K159, and T160 each contribute to the ATP site. The domain IV, binds dsDNA stretch occupies residues 332-457 (DNDTNKDLII…LQINLIINKF (126 aa)).

Belongs to the DnaA family. In terms of assembly, oligomerizes as a right-handed, spiral filament on DNA at oriC.

The protein localises to the cytoplasm. Its function is as follows. Plays an essential role in the initiation and regulation of chromosomal replication. ATP-DnaA binds to the origin of replication (oriC) to initiate formation of the DNA replication initiation complex once per cell cycle. Binds the DnaA box (a 9 base pair repeat at the origin) and separates the double-stranded (ds)DNA. Forms a right-handed helical filament on oriC DNA; dsDNA binds to the exterior of the filament while single-stranded (ss)DNA is stabiized in the filament's interior. The ATP-DnaA-oriC complex binds and stabilizes one strand of the AT-rich DNA unwinding element (DUE), permitting loading of DNA polymerase. After initiation quickly degrades to an ADP-DnaA complex that is not apt for DNA replication. Binds acidic phospholipids. This Ureaplasma parvum serovar 3 (strain ATCC 700970) protein is Chromosomal replication initiator protein DnaA.